The following is a 971-amino-acid chain: Translation initiation factor IF-2 (971 aa).

The span at 48–63 (DHLRKSHGATDGDKRK) shows a compositional bias: basic and acidic residues. 2 disordered regions span residues 48–86 (DHLRKSHGATDGDKRKITLTRKHTSEIKQSDATGKARTI) and 101–381 (DVAE…STFQ). Positions 105–114 (GADQGQAQVA) are enriched in low complexity. Over residues 121 to 181 (ELKRREEEAR…EEEAATKRAA (61 aa)) the composition is skewed to basic and acidic residues. Residues 182-203 (AEAAAAQQQAAAQQAAAEQEAT) are compositionally biased toward low complexity. The segment covering 210–261 (DEARAAAERAAQREAAKKAEDAAREAADKARAEQEEISKRRAAAEAEARAIR) has biased composition (basic and acidic residues). Residues 277-286 (PPKPVEPPKP) show a composition bias toward pro residues. Over residues 304–326 (ARPAVKKPAGAAAPATTQAPAGA) the composition is skewed to low complexity. Over residues 356-369 (SSGGVDRGWRGGPK) the composition is skewed to gly residues. The region spanning 471–640 (PRPPVVTVMG…LLQAEVLELK (170 aa)) is the tr-type G domain. The G1 stretch occupies residues 480–487 (GHVDHGKT). GTP is bound at residue 480 to 487 (GHVDHGKT). Positions 505 to 509 (GITQH) are G2. Residues 526-529 (DTPG) are G3. GTP-binding positions include 526-530 (DTPGH) and 580-583 (NKID). The tract at residues 580–583 (NKID) is G4. The segment at 616-618 (SAK) is G5.

The protein belongs to the TRAFAC class translation factor GTPase superfamily. Classic translation factor GTPase family. IF-2 subfamily.

It is found in the cytoplasm. Its function is as follows. One of the essential components for the initiation of protein synthesis. Protects formylmethionyl-tRNA from spontaneous hydrolysis and promotes its binding to the 30S ribosomal subunits. Also involved in the hydrolysis of GTP during the formation of the 70S ribosomal complex. This chain is Translation initiation factor IF-2, found in Burkholderia orbicola (strain MC0-3).